We begin with the raw amino-acid sequence, 177 residues long: Large ribosomal subunit protein uL6 (177 aa).

The protein belongs to the universal ribosomal protein uL6 family. In terms of assembly, part of the 50S ribosomal subunit.

This protein binds to the 23S rRNA, and is important in its secondary structure. It is located near the subunit interface in the base of the L7/L12 stalk, and near the tRNA binding site of the peptidyltransferase center. The chain is Large ribosomal subunit protein uL6 from Rhizobium johnstonii (strain DSM 114642 / LMG 32736 / 3841) (Rhizobium leguminosarum bv. viciae).